Consider the following 283-residue polypeptide: Ribonuclease P protein subunit p38 (283 aa).

At Ala2 the chain carries N-acetylalanine. Residues Ser12, Ser226, and Ser235 each carry the phosphoserine modification.

It belongs to the eukaryotic ribosomal protein eL8 family. In terms of assembly, component of nuclear RNase P and RNase MRP ribonucleoproteins. RNase P consists of a catalytic RNA moiety and about 10 protein subunits; POP1, POP4, POP5, POP7, RPP14, RPP21, RPP25, RPP30, RPP38 and RPP40. Within the RNase P complex, POP1, POP7 and RPP25 form the 'finger' subcomplex, POP5, RPP14, RPP40 and homodimeric RPP30 form the 'palm' subcomplex, and RPP21, POP4 and RPP38 form the 'wrist' subcomplex. All subunits of the RNase P complex interact with the catalytic RNA. Several subunits of RNase P are also part of the RNase MRP complex. RNase MRP consists of a catalytic RNA moiety and about 8 protein subunits; POP1, POP7, RPP25, RPP30, RPP38, RPP40 and possibly also POP4 and POP5.

The protein resides in the nucleus. It localises to the nucleolus. Its function is as follows. Component of ribonuclease P, a ribonucleoprotein complex that generates mature tRNA molecules by cleaving their 5'-ends. Also a component of the MRP ribonuclease complex, which cleaves pre-rRNA sequences. The sequence is that of Ribonuclease P protein subunit p38 (RPP38) from Homo sapiens (Human).